The sequence spans 773 residues: MGKKRAPQKGKTVTKPQEIIVDESKLNWKPVDIPDTLDDFGGFYGLEEIDGVDVKVVDGKVTFVTKKDSKVLKDSNKEKVGDDQESVENESGSDSESELLEFKNLDDIKEGELSAASYSSSDEDEQGNIESSKLTDPSEDVDEDVDEDVLKENVFNKDINIDDISPVNLPEWTNLAPLSMTILQSLQNLNFLRPTEIQKKSIPVIMQGVDVMGKASTGSGKTLAYGIPIVEKLISNFSQKNKKPISLIFTPTRELAHQVTDHLKKICEPVLAKSQYSILSLTGGLSIQKQQRLLKYDNSGQIVIATPGRFLELLEKDNTLIKRFSKVNTLILDEADRLLQDGHFDEFEKIIKHLLVERRKNRENSEGSSKIWQTLIFSATFSIDLFDKLSSSRQVKDRRFKNNEDELNAVIQHLMSKIHFNSKPVIIDTNPESKVSSQIKESLIECPPLERDLYCYYFLTMFPGTTLIFCNAIDSVKKLTVYLNNLGIPAFQIHSSMTQKNRLKSLERFKQQSAKQKTINHSNPDSVQLSTVLIASDVAARGLDIPGVQHVIHYHLPRSTDIYIHRSGRTARAGSEGVSAMICSPQESMGPLRKLRKTLATKNSVSTDLNSRSTNRKPIKWQNTVPLLPIETDILSQLRERSRLAGELADHEIASNSLRKDDNWLKKAADELGIDVDSDEDDISKSNSDTFLLKNKNKKMQKTINKDKVKAMRATLNELLSVPIRKDRRQKYLTGGLVNLADNLVKKRGHNSIIGHEKTNALETLKKKKKRNN.

The span at 73-82 (KDSNKEKVGD) shows a compositional bias: basic and acidic residues. 2 disordered regions span residues 73–99 (KDSN…ESEL) and 114–144 (SAAS…VDED). A compositionally biased stretch (acidic residues) spans 83–99 (DQESVENESGSDSESEL). A Phosphothreonine modification is found at Thr-135. A Phosphoserine modification is found at Ser-138. The Q motif motif lies at 171–199 (EWTNLAPLSMTILQSLQNLNFLRPTEIQK). The region spanning 202–399 (IPVIMQGVDV…SSSRQVKDRR (198 aa)) is the Helicase ATP-binding domain. 215-222 (ASTGSGKT) contributes to the ATP binding site. The DEAD box motif lies at 333 to 336 (DEAD). Residues 452-615 (DLYCYYFLTM…STDLNSRSTN (164 aa)) form the Helicase C-terminal domain. Ser-678 is modified (phosphoserine).

It belongs to the DEAD box helicase family. DDX24/MAK5 subfamily.

The protein localises to the nucleus. Its subcellular location is the nucleolus. The enzyme catalyses ATP + H2O = ADP + phosphate + H(+). Its function is as follows. ATP-binding RNA helicase involved in the biogenesis of 60S ribosomal subunits and is required for the normal formation of 25S and 5.8S rRNAs. Required for the maintenance of dsRNA killer plasmid. The polypeptide is ATP-dependent RNA helicase MAK5 (MAK5) (Saccharomyces cerevisiae (strain ATCC 204508 / S288c) (Baker's yeast)).